A 305-amino-acid polypeptide reads, in one-letter code: Carbonic anhydrase 4 (305 aa).

A signal peptide spans 1-17 (MQLLLALLALAYVAPST). In terms of domain architecture, Alpha-carbonic anhydrase spans 20 to 278 (SGWCYEIQTK…LGKRQVFKSH (259 aa)). Intrachain disulfides connect Cys23/Cys35 and Cys45/Cys222. His87 serves as the catalytic Proton donor/acceptor. 2 residues coordinate Zn(2+): His114 and His116. The N-linked (GlcNAc...) asparagine glycan is linked to Asn123. His139 lines the Zn(2+) pocket. Residue Asn214 is glycosylated (N-linked (GlcNAc...) asparagine). 218–219 (TT) serves as a coordination point for substrate. Ser277 carries GPI-anchor amidated serine lipidation. A propeptide spans 278–305 (HAPGQLLSLPLPTLLVPTLTCLVANFLQ) (removed in mature form).

Belongs to the alpha-carbonic anhydrase family. As to quaternary structure, interacts with SLC4A4. The cofactor is Zn(2+).

The protein localises to the cell membrane. It carries out the reaction hydrogencarbonate + H(+) = CO2 + H2O. With respect to regulation, inhibited by acetazolamide. Functionally, catalyzes the reversible hydration of carbon dioxide into bicarbonate and protons and thus is essential to maintaining intracellular and extracellular pH. May stimulate the sodium/bicarbonate transporter activity of SLC4A4 that acts in pH homeostasis. It is essential for acid overload removal from the retina and retina epithelium, and acid release in the choriocapillaris in the choroid. This chain is Carbonic anhydrase 4 (Ca4), found in Mus musculus (Mouse).